A 717-amino-acid polypeptide reads, in one-letter code: Acetone carboxylase beta subunit (717 aa).

As to quaternary structure, heterohexamer of two alpha, two beta and two gamma subunits. Requires Fe cation as cofactor. The cofactor is Mg(2+). It depends on Zn(2+) as a cofactor. The N-terminus is blocked.

The enzyme catalyses acetone + hydrogencarbonate + 2 ATP + 3 H2O = acetoacetate + 2 AMP + 4 phosphate + 4 H(+). Its function is as follows. Catalyzes the carboxylation of acetone to form acetoacetate. Has a reduced activity on butanone, and no activity on 2-pentatone, 3-pentatone, 2-hexanone, chloroacetone, pyruvate, phosphoenolpyruvate, acetaldehyde, propionaldehyde and propylene oxide. The chain is Acetone carboxylase beta subunit from Xanthobacter autotrophicus (strain ATCC BAA-1158 / Py2).